Reading from the N-terminus, the 274-residue chain is MDLVMLIKAAILGLVEGITEFLPISSTGHLIIAGSLLDFLDEQKRDVFVIVIQLGAILAVCWEYRRRLTDVVAGLGSDPQSWKFVTNLLIAFLPAVVLGLTFGKAIKAHLFSPVPVATAFIVGGLVILWAERRRHPIRVREVDEMTWVDALKIGLAQCFALIPGTSRSGATIIGGLFFGLSRKAATEFSFFLAIPTLTAASLYDLYKNRALLDGDMSGLMAVGFVVSFLSALVAVRGLIRYISRHDFTVFAWYRIAFGLVVLATAWSGLVSWSA.

6 consecutive transmembrane segments (helical) span residues 47–64 (VFVI…CWEY), 82–102 (WKFV…GLTF), 110–130 (LFSP…ILWA), 185–205 (ATEF…LYDL), 219–239 (LMAV…RGLI), and 249–269 (VFAW…WSGL).

This sequence belongs to the UppP family.

It is found in the cell inner membrane. The catalysed reaction is di-trans,octa-cis-undecaprenyl diphosphate + H2O = di-trans,octa-cis-undecaprenyl phosphate + phosphate + H(+). Its function is as follows. Catalyzes the dephosphorylation of undecaprenyl diphosphate (UPP). Confers resistance to bacitracin. This Rhodospirillum rubrum (strain ATCC 11170 / ATH 1.1.1 / DSM 467 / LMG 4362 / NCIMB 8255 / S1) protein is Undecaprenyl-diphosphatase 2.